The primary structure comprises 174 residues: Transcriptional repressor NrdR (174 aa).

The segment at cysteine 3–cysteine 34 is a zinc-finger region. Positions proline 49–aspartate 139 constitute an ATP-cone domain.

Belongs to the NrdR family. It depends on Zn(2+) as a cofactor.

In terms of biological role, negatively regulates transcription of bacterial ribonucleotide reductase nrd genes and operons by binding to NrdR-boxes. The polypeptide is Transcriptional repressor NrdR (Xanthomonas axonopodis pv. citri (strain 306)).